The chain runs to 539 residues: Protein mushroom body miniature (539 aa).

Polar residues predominate over residues 1-11 (MHNSGGQSGWN). The segment at 1-345 (MHNSGGQSGW…EDDKKARKQK (345 aa)) is disordered. A compositionally biased stretch (basic and acidic residues) spans 67-79 (KFRDPQQELDNHQ). Basic residues predominate over residues 80 to 89 (PNKRGGRRNR). The span at 90–101 (GGGGGGGGWGGR) shows a compositional bias: gly residues. Over residues 199-208 (IKKEKEMEHK) the composition is skewed to basic and acidic residues. Positions 268–289 (VASTPKPKAVKPVSSSDSSTSD) are enriched in low complexity. Phosphoserine is present on residues S288 and S290. A phosphothreonine mark is found at T292 and T327. Over residues 327-336 (TDEEESTEPE) the composition is skewed to acidic residues. Residue S332 is modified to Phosphoserine. At T333 the chain carries Phosphothreonine. 2 CCHC-type zinc fingers span residues 354 to 367 (CGICDKKGHTSFQC) and 371 to 386 (CRNCSGSYHGLKNCPN). The segment at 421–513 (VTAPVSAKPK…AASLPPQVFP (93 aa)) is disordered. The span at 428-447 (KPKKDKKASIKKIKKSSQKR) shows a compositional bias: basic residues. Positions 456–480 (DEEDDEEDDDEDEDDSSESDDSESS) are enriched in acidic residues.

Post-translationally, may be phosphorylated in vivo by CkIIalpha. mbm and CkIIalpha colocalize to the nucleolus and mbm is phosphorylated in vitro by CkIIalpha. Shows widespread expression in third instar larval brain with no apparent difference between males and females (at protein level). Detected at low levels in the mushroom body neuropil and is also expressed in many cells of the brain outside the mushroom body (at protein level). Not detected in third instar larval brain cells in anaphase (at protein level).

The protein localises to the nucleus. Its subcellular location is the nucleolus. The protein resides in the cytoplasm. Functionally, required for small ribosomal subunit biogenesis in neuroblasts. Plays a role in mushroom body development. This Drosophila melanogaster (Fruit fly) protein is Protein mushroom body miniature.